The following is a 318-amino-acid chain: Carnitine monooxygenase reductase subunit (318 aa).

In terms of domain architecture, FAD-binding FR-type spans 5-107 (YEMFPAVVTR…SEPKNLFPLA (103 aa)). Residues 233–318 (FTVVLAKSNQ…AKGKKLVLDL (86 aa)) enclose the 2Fe-2S ferredoxin-type domain. The [2Fe-2S] cluster site is built by C267, C272, C275, and C305.

Belongs to the PDR/VanB family. CntB subfamily. As to quaternary structure, composed of an oxygenase subunit (cntA) and a reductase subunit (cntB). The cofactor is FMN. Requires [2Fe-2S] cluster as cofactor.

It catalyses the reaction (R)-carnitine + NADH + O2 + H(+) = (3R)-3-hydroxy-4-oxobutanoate + trimethylamine + NAD(+) + H2O. The enzyme catalyses (R)-carnitine + NADPH + O2 + H(+) = (3R)-3-hydroxy-4-oxobutanoate + trimethylamine + NADP(+) + H2O. Its pathway is amine and polyamine metabolism; carnitine metabolism. In terms of biological role, converts carnitine to trimethylamine and malic semialdehyde. This chain is Carnitine monooxygenase reductase subunit, found in Acinetobacter baumannii (strain ATCC 19606 / DSM 30007 / JCM 6841 / CCUG 19606 / CIP 70.34 / NBRC 109757 / NCIMB 12457 / NCTC 12156 / 81).